A 222-amino-acid polypeptide reads, in one-letter code: Large ribosomal subunit protein uL4 (222 aa).

A disordered region spans residues 50–72 (TRGRSEVSHSTKKPFRQKGTGNA).

Belongs to the universal ribosomal protein uL4 family. As to quaternary structure, part of the 50S ribosomal subunit.

In terms of biological role, one of the primary rRNA binding proteins, this protein initially binds near the 5'-end of the 23S rRNA. It is important during the early stages of 50S assembly. It makes multiple contacts with different domains of the 23S rRNA in the assembled 50S subunit and ribosome. Functionally, forms part of the polypeptide exit tunnel. The polypeptide is Large ribosomal subunit protein uL4 (Chlamydia trachomatis serovar A (strain ATCC VR-571B / DSM 19440 / HAR-13)).